Reading from the N-terminus, the 124-residue chain is Putative membrane protein insertion efficiency factor (124 aa).

The span at 1–12 shows a compositional bias: basic and acidic residues; sequence MCPQPHADHAIT. Residues 1–26 are disordered; it reads MCPQPHADHAITRGDTGAAGGRNWSG.

Belongs to the UPF0161 family.

The protein resides in the cell inner membrane. Could be involved in insertion of integral membrane proteins into the membrane. The protein is Putative membrane protein insertion efficiency factor of Rhizobium meliloti (strain 1021) (Ensifer meliloti).